Here is a 60-residue protein sequence, read N- to C-terminus: Large ribosomal subunit protein uL30 (60 aa).

It belongs to the universal ribosomal protein uL30 family. As to quaternary structure, part of the 50S ribosomal subunit.

The polypeptide is Large ribosomal subunit protein uL30 (Acidovorax ebreus (strain TPSY) (Diaphorobacter sp. (strain TPSY))).